Here is a 398-residue protein sequence, read N- to C-terminus: ATP-dependent RNA helicase eIF4A (398 aa).

The short motif at 25 to 53 (DSFDSMELKPELLRGVYAYGFERPSAIQQ) is the Q motif element. The 171-residue stretch at 56-226 (ILPIVKGNDV…TKFMRDPVRI (171 aa)) folds into the Helicase ATP-binding domain. 69–76 (AQSGTGKT) is a binding site for ATP. The DEAD box signature appears at 174-177 (DEAD). Residues 237–398 (GIKQFYIAVE…EMPMNVADLI (162 aa)) enclose the Helicase C-terminal domain.

Belongs to the DEAD box helicase family. eIF4A subfamily. As to quaternary structure, component of the eIF4F complex, which composition varies with external and internal environmental conditions. It is composed of at least eIF4A, eIF4E and eIF4G.

The protein resides in the cytoplasm. It carries out the reaction ATP + H2O = ADP + phosphate + H(+). Functionally, ATP-dependent RNA helicase which is a subunit of the eIF4F complex involved in cap recognition and is required for mRNA binding to ribosome. In the current model of translation initiation, eIF4A unwinds RNA secondary structures in the 5'-UTR of mRNAs which is necessary to allow efficient binding of the small ribosomal subunit, and subsequent scanning for the initiator codon. In Emericella nidulans (strain FGSC A4 / ATCC 38163 / CBS 112.46 / NRRL 194 / M139) (Aspergillus nidulans), this protein is ATP-dependent RNA helicase eIF4A (tif1).